Consider the following 65-residue polypeptide: Large ribosomal subunit protein bL28 (65 aa).

The tract at residues 1 to 26 (MARRDALTGKSALSGQSRSHALNATK) is disordered. The segment covering 11–22 (SALSGQSRSHAL) has biased composition (polar residues).

It belongs to the bacterial ribosomal protein bL28 family.

The protein is Large ribosomal subunit protein bL28 of Mycoplasma mycoides subsp. mycoides SC (strain CCUG 32753 / NCTC 10114 / PG1).